A 150-amino-acid polypeptide reads, in one-letter code: Meiotic expression up-regulated protein 15 (150 aa).

The sequence is that of Meiotic expression up-regulated protein 15 (meu15) from Schizosaccharomyces pombe (strain 972 / ATCC 24843) (Fission yeast).